The sequence spans 584 residues: (+)-larreatricin hydroxylase, chloroplastic (584 aa).

A chloroplast-targeting transit peptide spans 1–32; it reads MASLSSQSKLLATPYSFPYHTKPSRVSLRRVS. A thylakoid-targeting transit peptide spans 33–79; that stretch reads CKASNDNKDKPNDQEKTFSIDRRNMLIGLGGLYGASNVFPSNQSTLA. 2 cysteine pairs are disulfide-bonded: cysteine 91/cysteine 106 and cysteine 105/cysteine 168. Cu cation is bound by residues histidine 167, histidine 188, histidine 197, histidine 319, histidine 323, and histidine 353. Residues 171–188 constitute a cross-link (2'-(S-cysteinyl)-histidine (Cys-His)); sequence CNGAYDQVGFPDVNIQVH. A propeptide spans 432–584 (removed in mature form); it reads RLRSKATTTT…KIEFVRDEED (153 aa).

It belongs to the tyrosinase family. The cofactor is Cu(2+).

Its subcellular location is the plastid. It is found in the chloroplast thylakoid lumen. It carries out the reaction (+)-larreatricin + AH2 + O2 = (+)-3'-hydroxylarreatricin + A + H2O. Its function is as follows. Enantio-specific polyphenol oxidase involved in aromatic ring hydroxylation. Involved in the biosynthesis of the creosote bush 8-8' linked lignans. Has a strong preference for the 3' position of (+)-larreatricin. The chain is (+)-larreatricin hydroxylase, chloroplastic from Larrea tridentata (Creosote bush).